Here is a 186-residue protein sequence, read N- to C-terminus: Elongation factor P (186 aa).

The protein belongs to the elongation factor P family.

The protein resides in the cytoplasm. It functions in the pathway protein biosynthesis; polypeptide chain elongation. Functionally, involved in peptide bond synthesis. Stimulates efficient translation and peptide-bond synthesis on native or reconstituted 70S ribosomes in vitro. Probably functions indirectly by altering the affinity of the ribosome for aminoacyl-tRNA, thus increasing their reactivity as acceptors for peptidyl transferase. This chain is Elongation factor P, found in Prochlorococcus marinus (strain MIT 9313).